Consider the following 323-residue polypeptide: Replication factor C subunit 4 (323 aa).

ATP is bound by residues valine 12, valine 24, glycine 49 to threonine 57, asparagine 145, and arginine 203.

Belongs to the activator 1 small subunits family. As to quaternary structure, replication factor C (RFC) is a heteropentamer of subunits RFC1, RFC2, RFC3, RFC4 and RFC5 and forms a complex with POL30/PCNA in the presence of ATP. Component of the RAD24-RFC complex which consists of RAD14, RFC2, RFC3, RFC4 and RFC5 and associates with the checkpoint clamp DDC1:MEC3:RAD17 complex. Component of the ELG1-RFC complex which consists of ELG1, RFC2, RFC3, RFC4 and RFC5. Component of the CTF18-RFC complex, which consists of CTF18, CTF8, DCC1, RFC2, RFC3, RFC4 and RFC5. RFC4 interacts with ECO1.

Its subcellular location is the nucleus. In terms of biological role, component of ATP-dependent clamp loader (RFC and RFC-like) complexes for DNA clamps, such as the POL30/PCNA homotrimer and the checkpoint clamp DDC1:MEC3:RAD17 complex. During a clamp loading circle, the RFC:clamp complex binds to DNA and the recognition of the double-stranded/single-stranded junction stimulates ATP hydrolysis by RFC. The complex presumably provides bipartite ATP sites in which one subunit supplies a catalytic site for hydrolysis of ATP bound to the neighboring subunit. Dissociation of RFC from the clamp leaves the clamp encircling DNA. Component of the replication factor C (RFC or activator 1) complex which loads POL30/PCNA and acts during elongation of primed DNA templates by DNA polymerase delta and epsilon. RFC has an essential but redundant activity in sister chromatid cohesion establishment. Component of the RFC-like complex CTF18-RFC which is required for efficient establishment of chromosome cohesion during S-phase and may load or unload POL30/PCNA. Component of the RFC-like RAD24-RFC complex which loads the checkpoint clamp DDC1:MEC3:RAD17 complex and is involved in DNA repair pathways. Component of the RFC-like ELG1-RFC complex which appears to have a role in DNA replication, replication fork re-start, recombination and repair. The polypeptide is Replication factor C subunit 4 (RFC4) (Saccharomyces cerevisiae (strain ATCC 204508 / S288c) (Baker's yeast)).